The sequence spans 229 residues: uncharacterized protein (229 aa).

The next 7 helical transmembrane spans lie at 6–26 (LFFVSYVLYGLGFVSLIFLPT), 36–56 (LVSVIIGLIANYEMKFNILLA), 80–99 (SVYDVFCHTIMMMLCYHRIY), 114–134 (VLSVLFILGAMINCLVSHLII), 144–164 (IFEYTTIFQAVSTGYWVATML), 174–194 (FYYHWLLWITLMTTNWFIYKF), and 207–224 (YVEAVFIICTWYSGVLSS).

Belongs to the mimivirus L68/R809 family.

The protein resides in the membrane. This is an uncharacterized protein from Acanthamoeba polyphaga (Amoeba).